Consider the following 255-residue polypeptide: 5'-nucleotidase SurE (255 aa).

The a divalent metal cation site is built by Asp-8, Asp-9, Ser-40, and Asn-93.

This sequence belongs to the SurE nucleotidase family. The cofactor is a divalent metal cation.

The protein resides in the cytoplasm. The enzyme catalyses a ribonucleoside 5'-phosphate + H2O = a ribonucleoside + phosphate. In terms of biological role, nucleotidase that shows phosphatase activity on nucleoside 5'-monophosphates. This Rhodopseudomonas palustris (strain BisB5) protein is 5'-nucleotidase SurE.